The following is a 128-amino-acid chain: Phycoerythrin alpha-3 chain, chloroplastic (128 aa).

The N-terminal 52 residues, 1-52, are a transit peptide targeting the chloroplast; that stretch reads MFAKTLASLAVIGSAAAYVPMMSMDMGRREVVQAGAAAAAVTPFLSGAPAGA. Position 56 is a 5-hydroxylysine (Lys56). Residues 70 to 89 are disordered; sequence GCSRAPKESTGGKAGGQDDE. 15,16-dihydrobiliverdin-binding positions include Cys71, Arg73, 77-78, and Lys93; that span reads ES.

Belongs to the phycoerythrin family. As to quaternary structure, heterotetramer of 2 different alpha chains and 2 identical beta chains. The subunit composition could comprise of any combination of 2 out of 4 different alpha units with an invariant beta unit. In terms of processing, contains one covalently linked 15,16-dihydrobiliverdin chromophore.

It is found in the plastid. The protein localises to the chloroplast thylakoid membrane. In terms of biological role, light-harvesting photosynthetic tetrapyrrole chromophore-protein from the phycobiliprotein complex. This is Phycoerythrin alpha-3 chain, chloroplastic (cpeA3) from Rhodomonas sp. (strain CS 24) (Chroomonas sp. (strain CS24)).